The primary structure comprises 160 residues: Early E3 18.5 kDa glycoprotein (160 aa).

Residues 1–17 form the signal peptide; that stretch reads MIRYIILGLLTLASAHG. The Lumenal segment spans residues 18–124; it reads TTQKVDFKEP…PPQNCVENTG (107 aa). Disulfide bonds link Cys29/Cys46 and Cys40/Cys101. Residues Asn30 and Asn79 are each glycosylated (N-linked (GlcNAc...) asparagine; by host). The helical transmembrane segment at 125 to 145 threads the bilayer; sequence TFCCTAMLITVLALVCTLLYI. The Cytoplasmic segment spans residues 146-160; it reads KYKSRRSFIEEKKMP. The short motif at 157–160 is the Di-lysine motif element; it reads KKMP.

It belongs to the adenoviridae E19 family. Both disulfide bonds are absolutely critical for the interaction with MHC antigens. Post-translationally, N-glycosylated; high-mannose.

The protein resides in the host endoplasmic reticulum membrane. In terms of biological role, binds and retains class I heavy chains in the endoplasmic reticulum during the early period of virus infection, thereby impairing their transport to the cell surface. Also delays the expression of class I alleles that it cannot affect by direct retention. Binds transporters associated with antigen processing (TAP) and acts as a tapasin inhibitor, preventing class I/TAP association. In consequence, infected cells are masked for immune recognition by cytotoxic T-lymphocytes. This Homo sapiens (Human) protein is Early E3 18.5 kDa glycoprotein.